The primary structure comprises 394 residues: Queuine tRNA-ribosyltransferase accessory subunit 2 (394 aa).

4 residues coordinate Zn(2+): Cys-336, Cys-338, Cys-341, and His-367.

The protein belongs to the queuine tRNA-ribosyltransferase family. QTRT2 subfamily. Heterodimer of a catalytic subunit and an accessory subunit. Zn(2+) is required as a cofactor.

The protein resides in the cytoplasm. Functionally, non-catalytic subunit of the queuine tRNA-ribosyltransferase (TGT) that catalyzes the base-exchange of a guanine (G) residue with queuine (Q) at position 34 (anticodon wobble position) in tRNAs with GU(N) anticodons (tRNA-Asp, -Asn, -His and -Tyr), resulting in the hypermodified nucleoside queuosine (7-(((4,5-cis-dihydroxy-2-cyclopenten-1-yl)amino)methyl)-7-deazaguanosine). This chain is Queuine tRNA-ribosyltransferase accessory subunit 2, found in Ixodes scapularis (Black-legged tick).